The primary structure comprises 232 residues: Exosome complex component RRP40 (232 aa).

Belongs to the RRP40 family. As to quaternary structure, component of the RNA exosome complex. Specifically part of the catalytically inactive RNA exosome core complex.

The protein localises to the cytoplasm. It localises to the nucleus. Its subcellular location is the nucleolus. In terms of biological role, non-catalytic component of the RNA exosome complex which has 3'-&gt;5' exoribonuclease activity and participates in a multitude of cellular RNA processing and degradation events. In the nucleus, the RNA exosome complex is involved in proper maturation of stable RNA species such as rRNA, snRNA and snoRNA, in the elimination of RNA processing by-products and non-coding 'pervasive' transcripts such as antisense RNA species, and of mRNAs with processing defects, thereby limiting or excluding their export to the cytoplasm. In the cytoplasm, the RNA exosome complex is involved in general mRNA turnover and specifically degrades inherently unstable mRNAs containing AU-rich elements (AREs) within their 3' untranslated regions, and in RNA surveillance pathways, preventing translation of aberrant mRNAs. The catalytic inactive RNA exosome core complex of 9 subunits is proposed to play a pivotal role in the binding and presentation of RNA for ribonucleolysis, and to serve as a scaffold for the association with catalytic subunits and accessory proteins or complexes. Required generally for normal embryonic and neuronal development. Also plays a critical role in the maintenance of neuronal function in mature flies by controlling the levels of specific mRNAs such as the synaptic regulator Arc1. This chain is Exosome complex component RRP40, found in Drosophila melanogaster (Fruit fly).